The following is a 485-amino-acid chain: ATP synthase subunit beta (485 aa).

ATP is bound at residue 158 to 165; it reads GGAGVGKT.

It belongs to the ATPase alpha/beta chains family. In terms of assembly, F-type ATPases have 2 components, CF(1) - the catalytic core - and CF(0) - the membrane proton channel. CF(1) has five subunits: alpha(3), beta(3), gamma(1), delta(1), epsilon(1). CF(0) has four main subunits: a(1), b(1), b'(1) and c(9-12).

Its subcellular location is the cell inner membrane. It catalyses the reaction ATP + H2O + 4 H(+)(in) = ADP + phosphate + 5 H(+)(out). Functionally, produces ATP from ADP in the presence of a proton gradient across the membrane. The catalytic sites are hosted primarily by the beta subunits. This Erythrobacter litoralis (strain HTCC2594) protein is ATP synthase subunit beta.